Reading from the N-terminus, the 377-residue chain is Guanine nucleotide-binding protein subunit beta (377 aa).

WD repeat units follow at residues 63–93 (GHTG…IVWN), 105–135 (LPCA…SIFN), 154–185 (GHKG…VLWD), 202–233 (GHTA…RLWD), 246–276 (CHEG…RLFD), 293–323 (GDIP…YVWD), and 339–369 (SHEG…KIWA).

It belongs to the WD repeat G protein beta family. As to quaternary structure, g proteins are composed of 3 units, alpha, beta and gamma.

It localises to the cell membrane. The protein resides in the endoplasmic reticulum membrane. In terms of biological role, guanine nucleotide-binding proteins (G proteins) are involved as a modulator or transducer in various transmembrane signaling systems. The beta and gamma chains are required for the GTPase activity, for replacement of GDP by GTP, and for G protein-effector interaction. This chain is Guanine nucleotide-binding protein subunit beta, found in Nicotiana plumbaginifolia (Leadwort-leaved tobacco).